The chain runs to 529 residues: Cytochrome P450 monooxygenase ausG (529 aa).

A helical membrane pass occupies residues 31-51 (FLVTCGLPWLLLLFSVTIILF). Cysteine 470 is a binding site for heme.

Belongs to the cytochrome P450 family. Requires heme as cofactor.

It is found in the membrane. It functions in the pathway secondary metabolite biosynthesis; terpenoid biosynthesis. Its function is as follows. Cytochrome P450 monooxygenase; part of the gene cluster B that mediates the biosynthesis of austinol and dehydroaustinol, two fungal meroterpenoids. The first step of the pathway is the synthesis of 3,5-dimethylorsellinic acid by the polyketide synthase ausA. 3,5-dimethylorsellinic acid is then prenylated by the polyprenyl transferase ausN. Further epoxidation by the FAD-dependent monooxygenase ausM and cyclization by the probable terpene cyclase ausL lead to the formation of protoaustinoid A. Protoaustinoid A is then oxidized to spiro-lactone preaustinoid A3 by the combined action of the FAD-binding monooxygenases ausB and ausC, and the dioxygenase ausE. Acid-catalyzed keto-rearrangement and ring contraction of the tetraketide portion of preaustinoid A3 by ausJ lead to the formation of preaustinoid A4. The aldo-keto reductase ausK, with the help of ausH, is involved in the next step by transforming preaustinoid A4 into isoaustinone which is in turn hydroxylated by the P450 monooxygenase ausI to form austinolide. Finally, the cytochrome P450 monooxygenase ausG modifies austinolide to austinol. Austinol can be further modified to dehydroaustinol which forms a diffusible complex with diorcinol that initiates conidiation. Due to genetic rearrangements of the clusters and the subsequent loss of some enzymes, the end products of the Emericella nidulans austinoid biosynthesis clusters are austinol and dehydroaustinol, even if additional enzymes, such as the O-acetyltransferase ausQ and the cytochrome P450 monooxygenase ausR are still functional. The protein is Cytochrome P450 monooxygenase ausG of Emericella nidulans (strain FGSC A4 / ATCC 38163 / CBS 112.46 / NRRL 194 / M139) (Aspergillus nidulans).